A 210-amino-acid polypeptide reads, in one-letter code: Proline-rich protein 20G (210 aa).

Basic residues predominate over residues 1–11 (MEEPRHSKRPR). Positions 1-82 (MEEPRHSKRP…GGSWRAGRGR (82 aa)) are disordered. Residues 69 to 82 (GQRGGGSWRAGRGR) show a composition bias toward gly residues.

The protein belongs to the PRR20 family.

The polypeptide is Proline-rich protein 20G (Homo sapiens (Human)).